Here is a 341-residue protein sequence, read N- to C-terminus: UDP-3-O-acylglucosamine N-acyltransferase 2 (341 aa).

The active-site Proton acceptor is His-254.

Belongs to the transferase hexapeptide repeat family. LpxD subfamily. As to quaternary structure, homotrimer.

The catalysed reaction is a UDP-3-O-[(3R)-3-hydroxyacyl]-alpha-D-glucosamine + a (3R)-hydroxyacyl-[ACP] = a UDP-2-N,3-O-bis[(3R)-3-hydroxyacyl]-alpha-D-glucosamine + holo-[ACP] + H(+). The protein operates within bacterial outer membrane biogenesis; LPS lipid A biosynthesis. In terms of biological role, catalyzes the N-acylation of UDP-3-O-acylglucosamine using 3-hydroxyacyl-ACP as the acyl donor. Is involved in the biosynthesis of lipid A, a phosphorylated glycolipid that anchors the lipopolysaccharide to the outer membrane of the cell. This chain is UDP-3-O-acylglucosamine N-acyltransferase 2, found in Nitrobacter winogradskyi (strain ATCC 25391 / DSM 10237 / CIP 104748 / NCIMB 11846 / Nb-255).